A 102-amino-acid polypeptide reads, in one-letter code: NADH-quinone oxidoreductase subunit K (102 aa).

A run of 3 helical transmembrane segments spans residues 5–25, 30–50, and 62–82; these read LAHYLAVAAILFTIGVFGIFV, IIVILMSIELILLAVNINLVA, and IFAMFVLTVAAAEAAVGLAIL.

It belongs to the complex I subunit 4L family. As to quaternary structure, NDH-1 is composed of 14 different subunits. Subunits NuoA, H, J, K, L, M, N constitute the membrane sector of the complex.

The protein localises to the cell inner membrane. It carries out the reaction a quinone + NADH + 5 H(+)(in) = a quinol + NAD(+) + 4 H(+)(out). NDH-1 shuttles electrons from NADH, via FMN and iron-sulfur (Fe-S) centers, to quinones in the respiratory chain. The immediate electron acceptor for the enzyme in this species is believed to be ubiquinone. Couples the redox reaction to proton translocation (for every two electrons transferred, four hydrogen ions are translocated across the cytoplasmic membrane), and thus conserves the redox energy in a proton gradient. In Phenylobacterium zucineum (strain HLK1), this protein is NADH-quinone oxidoreductase subunit K.